The chain runs to 359 residues: 3-dehydroquinate synthase (359 aa).

Residues 71-76 (DGEAHK), 105-109 (GVIGD), 129-130 (TT), Lys-142, Lys-151, and 169-172 (TLHT) each bind NAD(+). Glu-184, His-247, and His-264 together coordinate Zn(2+).

It belongs to the sugar phosphate cyclases superfamily. Dehydroquinate synthase family. Requires Co(2+) as cofactor. Zn(2+) serves as cofactor. It depends on NAD(+) as a cofactor.

It is found in the cytoplasm. It carries out the reaction 7-phospho-2-dehydro-3-deoxy-D-arabino-heptonate = 3-dehydroquinate + phosphate. It functions in the pathway metabolic intermediate biosynthesis; chorismate biosynthesis; chorismate from D-erythrose 4-phosphate and phosphoenolpyruvate: step 2/7. In terms of biological role, catalyzes the conversion of 3-deoxy-D-arabino-heptulosonate 7-phosphate (DAHP) to dehydroquinate (DHQ). The sequence is that of 3-dehydroquinate synthase from Neisseria gonorrhoeae (strain ATCC 700825 / FA 1090).